A 145-amino-acid polypeptide reads, in one-letter code: Acidic phospholipase A2 1 (145 aa).

The first 21 residues, 1-21, serve as a signal peptide directing secretion; sequence MYPAHLLVLLAVCVSLLGATA. Positions 22 to 27 are excised as a propeptide; that stretch reads IPPLPL. Disulfide bonds link Cys-38-Cys-98, Cys-54-Cys-144, Cys-56-Cys-72, Cys-71-Cys-125, Cys-78-Cys-118, Cys-87-Cys-111, and Cys-105-Cys-116. Tyr-55, Gly-57, and Gly-59 together coordinate Ca(2+). His-75 is a catalytic residue. Asp-76 is a binding site for Ca(2+). Asp-119 is an active-site residue.

The protein belongs to the phospholipase A2 family. Group I subfamily. D49 sub-subfamily. In terms of assembly, monomer. Requires Ca(2+) as cofactor. As to expression, expressed by the venom gland.

It is found in the secreted. The enzyme catalyses a 1,2-diacyl-sn-glycero-3-phosphocholine + H2O = a 1-acyl-sn-glycero-3-phosphocholine + a fatty acid + H(+). PLA2 catalyzes the calcium-dependent hydrolysis of the 2-acyl groups in 3-sn-phosphoglycerides. This Laticauda semifasciata (Black-banded sea krait) protein is Acidic phospholipase A2 1.